The following is a 552-amino-acid chain: Arginine--tRNA ligase (552 aa).

The 'HIGH' region motif lies at 130–140 (ANPTGPLSIGH).

Belongs to the class-I aminoacyl-tRNA synthetase family. As to quaternary structure, monomer.

It is found in the cytoplasm. The catalysed reaction is tRNA(Arg) + L-arginine + ATP = L-arginyl-tRNA(Arg) + AMP + diphosphate. The protein is Arginine--tRNA ligase of Desulfotalea psychrophila (strain LSv54 / DSM 12343).